A 423-amino-acid chain; its full sequence is Phosphoribosylamine--glycine ligase (423 aa).

Residues 107–312 form the ATP-grasp domain; sequence KDLCARYDIP…LLPILYATAT (206 aa). 133 to 193 is an ATP binding site; sequence VRAQGAPIVI…EAFLDGEEAS (61 aa). Mg(2+)-binding residues include glutamate 282 and asparagine 284.

It belongs to the GARS family. Mg(2+) is required as a cofactor. Requires Mn(2+) as cofactor.

It carries out the reaction 5-phospho-beta-D-ribosylamine + glycine + ATP = N(1)-(5-phospho-beta-D-ribosyl)glycinamide + ADP + phosphate + H(+). The protein operates within purine metabolism; IMP biosynthesis via de novo pathway; N(1)-(5-phospho-D-ribosyl)glycinamide from 5-phospho-alpha-D-ribose 1-diphosphate: step 2/2. The polypeptide is Phosphoribosylamine--glycine ligase (Agrobacterium fabrum (strain C58 / ATCC 33970) (Agrobacterium tumefaciens (strain C58))).